An 868-amino-acid polypeptide reads, in one-letter code: Rifampicin phosphotransferase (868 aa).

The segment at 5–317 (TERYVLDLQE…FHIVQSRPIT (313 aa)) is ATP-binding. ATP is bound by residues Lys26, Arg120, Gly135, Thr139, Gln186, Glu300, Gln312, and Arg314. Residues 330 to 755 (NHVYVSVGHQ…TSDGEALTGA (426 aa)) are rifampicin-binding. A disordered region spans residues 410-430 (FVPSLPDAPPAGPRAGAAPEP). The tract at residues 768–866 (GLPVSTGTVE…VHGTDGYIEI (99 aa)) is swivel phosphohistidine. Catalysis depends on His826, which acts as the Tele-phosphohistidine intermediate.

This sequence belongs to the rifampicin phosphotransferase family.

It catalyses the reaction rifampicin + ATP + H2O = 21-phosphorifampicin + AMP + phosphate + 2 H(+). In terms of biological role, catalyzes the phosphorylation of rifampicin, also known as rifampin (RIF), leading to its inactivation. Confers high level resistance to a variety of clinically used rifamycin antibiotics. Does not show phosphoenolpyruvate (PEP) synthase activity. This Streptomyces sviceus (strain ATCC 29083 / DSM 924 / JCM 4929 / NBRC 13980 / NCIMB 11184 / NRRL 5439 / UC 5370) protein is Rifampicin phosphotransferase.